The primary structure comprises 488 residues: Ankyrin repeat domain-containing protein 13C (488 aa).

Positions 1 to 60 are disordered; that stretch reads MTGEKIRSVRKERKSGLDLLEPDEEPAATGPAKHRGSKIFSGGNHRISRSSSSPGDPDGA. Positions 41–59 are enriched in low complexity; it reads SGGNHRISRSSSSPGDPDG. ANK repeat units lie at residues 58–87, 90–119, and 123–152; these read DGAYPVHECVFRGDVRRLSSLIRTQNIAQK, HGNTPLHLAVMMGHKECAHLLLAHNAPVKV, and QGWSPLAEAISYGDRQMITALLRKLKQQSR.

Its subcellular location is the endoplasmic reticulum membrane. Its function is as follows. Acts as a molecular chaperone for G protein-coupled receptors, regulating their biogenesis and exit from the ER. This is Ankyrin repeat domain-containing protein 13C (ankrd13c) from Danio rerio (Zebrafish).